Reading from the N-terminus, the 62-residue chain is Small ribosomal subunit protein uS14 (62 aa).

4 residues coordinate Zn(2+): Cys-25, Cys-28, Cys-41, and Cys-44.

This sequence belongs to the universal ribosomal protein uS14 family. Zinc-binding uS14 subfamily. In terms of assembly, part of the 30S ribosomal subunit. Contacts proteins S3 and S10. It depends on Zn(2+) as a cofactor.

In terms of biological role, binds 16S rRNA, required for the assembly of 30S particles and may also be responsible for determining the conformation of the 16S rRNA at the A site. This is Small ribosomal subunit protein uS14 from Persephonella marina (strain DSM 14350 / EX-H1).